The sequence spans 347 residues: NADH-ubiquinone oxidoreductase chain 2 (347 aa).

A run of 10 helical transmembrane segments spans residues 13-33, 59-79, 96-116, 122-142, 144-164, 178-200, 210-232, 246-266, 276-296, and 326-346; these read IVLG…WMGF, YFLT…INLV, IIMT…FWVP, ISLL…LSVL, VISP…SILI, ILAY…NPMM, LMTA…ALSH, IIML…KWMI, IILA…YMRL, and LPML…MILL.

The protein belongs to the complex I subunit 2 family. As to quaternary structure, core subunit of respiratory chain NADH dehydrogenase (Complex I) which is composed of 45 different subunits. Interacts with TMEM242.

It is found in the mitochondrion inner membrane. It carries out the reaction a ubiquinone + NADH + 5 H(+)(in) = a ubiquinol + NAD(+) + 4 H(+)(out). Core subunit of the mitochondrial membrane respiratory chain NADH dehydrogenase (Complex I) which catalyzes electron transfer from NADH through the respiratory chain, using ubiquinone as an electron acceptor. Essential for the catalytic activity and assembly of complex I. This Rhynchonycteris naso (Brazilian long-nosed bat) protein is NADH-ubiquinone oxidoreductase chain 2.